Consider the following 538-residue polypeptide: MALPYHIFLFTVLLPSFTLTAPPPCRCMTSSSPYQEFLWRMQRPGNIDAPSYRSLSKGTPTFTAHTHMPRNCYHSATLCMHANTHYWTGKMINPSCPGGLGVTVCWTYFTQTGMSDGGGVQDQAREKHVKEVISQLTRVHGTSSPYKGLDLSKLHETLRTHTRLVSLFNTTLTGLHEVSAQNPTNCWICLPLNFRPYVSIPVPEQWNNFSTEINTTSVLVGPLVSNLEITHTSNLTCVKFSNTTYTTNSQCIRWVTPPTQIVCLPSGIFFVCGTSAYRCLNGSSESMCFLSFLVPPMTIYTEQDLYSYVISKPRNKRVPILPFVIGAGVLGALGTGIGGITTSTQFYYKLSQELNGDMERVADSLVTLQDQLNSLAAVVLQNRRALDLLTAERGGTCLFLGEECCYYVNQSGIVTEKVKEIRDRIQRRAEELRNTGPWGLLSQWMPWILPFLGPLAAIILLLLFGPCIFNLLVNFVSSRIEAVKLQMEPKMQSKTKIYRRPLDRPASPRSDVNDIKGTPPEEISAAQPLLRPNSAGSS.

Residues 1 to 20 form the signal peptide; that stretch reads MALPYHIFLFTVLLPSFTLT. Residues 21–443 lie on the Extracellular side of the membrane; sequence APPPCRCMTS…NTGPWGLLSQ (423 aa). Asn-169 carries N-linked (GlcNAc...) asparagine glycosylation. Positions 186 to 189 match the CXXC motif; the sequence is CWIC. Intrachain disulfides connect Cys-186/Cys-189, Cys-186/Cys-405, and Cys-397/Cys-404. N-linked (GlcNAc...) asparagine glycosylation is found at Asn-208, Asn-214, Asn-234, Asn-242, and Asn-281. The tract at residues 320-340 is fusion peptide; the sequence is ILPFVIGAGVLGALGTGIGGI. Residues 380–396 form an immunosuppression region; it reads LQNRRALDLLTAERGGT. Positions 397-406 match the CX6CC motif; the sequence is CLFLGEECCY. Asn-409 is a glycosylation site (N-linked (GlcNAc...) asparagine). The helical transmembrane segment at 444 to 464 threads the bilayer; sequence WMPWILPFLGPLAAIILLLLF. The tract at residues 465–484 is essential for the fusiogenic function; the sequence is GPCIFNLLVNFVSSRIEAVK. Over 465-538 the chain is Cytoplasmic; that stretch reads GPCIFNLLVN…LLRPNSAGSS (74 aa). Positions 496–538 are disordered; that stretch reads KIYRRPLDRPASPRSDVNDIKGTPPEEISAAQPLLRPNSAGSS.

Belongs to the gamma type-C retroviral envelope protein family. HERV class-I W env subfamily. As to quaternary structure, the mature envelope protein (Env) consists of a trimer of SU-TM heterodimers attached probably by a labile interchain disulfide bond. Interacts with the C-type lectin CD209/DC-SIGN. In terms of processing, specific enzymatic cleavages in vivo yield mature proteins. Envelope glycoproteins are synthesized as an inactive precursor that is heavily N-glycosylated and processed likely by furin in the Golgi to yield the mature SU and TM proteins. The cleavage site between SU and TM requires the minimal sequence [KR]-X-[KR]-R. The intracytoplasmic tail cleavage by the viral protease that is required for the fusiogenic activity of some retroviruses envelope proteins seems to have been lost during evolution. The CXXC motif is highly conserved across a broad range of retroviral envelope proteins. It is thought to participate in the formation of a labile disulfide bond possibly with the CX6CC motif present in the transmembrane protein. Isomerization of the intersubunit disulfide bond to an SU intrachain disulfide bond is thought to occur upon receptor recognition in order to allow membrane fusion. As to expression, expressed at higher level in placental syncytiotrophoblast. Expressed at intermediate level in testis. Seems also to be found at low level in adrenal tissue, bone marrow, breast, colon, kidney, ovary, prostate, skin, spleen, thymus, thyroid, brain and trachea. Both mRNA and protein levels are significantly increased in the brain of individuals with multiple sclerosis, particularly in astrocytes and microglia.

Its subcellular location is the cell membrane. The protein localises to the virion. In terms of biological role, this endogenous retroviral envelope protein has retained its original fusogenic properties and participates in trophoblast fusion and the formation of a syncytium during placenta morphogenesis. May induce fusion through binding of SLC1A4 and SLC1A5. Endogenous envelope proteins may have kept, lost or modified their original function during evolution. Retroviral envelope proteins mediate receptor recognition and membrane fusion during early infection. The surface protein (SU) mediates receptor recognition, while the transmembrane protein (TM) acts as a class I viral fusion protein. The protein may have at least 3 conformational states: pre-fusion native state, pre-hairpin intermediate state, and post-fusion hairpin state. During viral and target cell membrane fusion, the coiled coil regions (heptad repeats) assume a trimer-of-hairpins structure, positioning the fusion peptide in close proximity to the C-terminal region of the ectodomain. The formation of this structure appears to drive apposition and subsequent fusion of membranes. This Homo sapiens (Human) protein is Syncytin-1 (ERVW-1).